The chain runs to 244 residues: tRNA (guanine-N(1)-)-methyltransferase (244 aa).

S-adenosyl-L-methionine-binding positions include Gly-120 and 140–145; that span reads IGDYIL.

It belongs to the RNA methyltransferase TrmD family. Homodimer.

It is found in the cytoplasm. The catalysed reaction is guanosine(37) in tRNA + S-adenosyl-L-methionine = N(1)-methylguanosine(37) in tRNA + S-adenosyl-L-homocysteine + H(+). Functionally, specifically methylates guanosine-37 in various tRNAs. The chain is tRNA (guanine-N(1)-)-methyltransferase from Brucella abortus (strain S19).